The chain runs to 416 residues: 4-hydroxy-3-methylbut-2-en-1-yl diphosphate synthase (flavodoxin) (416 aa).

The [4Fe-4S] cluster site is built by Cys-304, Cys-307, Cys-350, and Glu-357.

The protein belongs to the IspG family. The cofactor is [4Fe-4S] cluster.

It catalyses the reaction (2E)-4-hydroxy-3-methylbut-2-enyl diphosphate + oxidized [flavodoxin] + H2O + 2 H(+) = 2-C-methyl-D-erythritol 2,4-cyclic diphosphate + reduced [flavodoxin]. It functions in the pathway isoprenoid biosynthesis; isopentenyl diphosphate biosynthesis via DXP pathway; isopentenyl diphosphate from 1-deoxy-D-xylulose 5-phosphate: step 5/6. Its function is as follows. Converts 2C-methyl-D-erythritol 2,4-cyclodiphosphate (ME-2,4cPP) into 1-hydroxy-2-methyl-2-(E)-butenyl 4-diphosphate. The sequence is that of 4-hydroxy-3-methylbut-2-en-1-yl diphosphate synthase (flavodoxin) from Rhizobium etli (strain ATCC 51251 / DSM 11541 / JCM 21823 / NBRC 15573 / CFN 42).